The primary structure comprises 127 residues: Holo-[acyl-carrier-protein] synthase (127 aa).

Mg(2+) is bound by residues aspartate 8 and glutamate 56.

It belongs to the P-Pant transferase superfamily. AcpS family. The cofactor is Mg(2+).

Its subcellular location is the cytoplasm. The enzyme catalyses apo-[ACP] + CoA = holo-[ACP] + adenosine 3',5'-bisphosphate + H(+). Transfers the 4'-phosphopantetheine moiety from coenzyme A to a Ser of acyl-carrier-protein. The chain is Holo-[acyl-carrier-protein] synthase from Deinococcus deserti (strain DSM 17065 / CIP 109153 / LMG 22923 / VCD115).